A 1447-amino-acid polypeptide reads, in one-letter code: Inositol 1,4,5-triphosphate receptor associated 2 (1447 aa).

The Cytoplasmic portion of the chain corresponds to 1 to 1388; sequence MDVGVTPRRH…RPAVSRGARG (1388 aa). Disordered regions lie at residues 64–96 and 420–439; these read VRPD…PRAP and LSLT…RKQM. Over residues 71-92 the composition is skewed to polar residues; it reads SASSAGMLTPTASPGPGSSCNT. 2 coiled-coil regions span residues 354–518 and 665–731; these read FCVA…EYSS and TDWI…DNRE. Positions 420–436 are enriched in low complexity; that stretch reads LSLTSSEESRAQAAAQR. Disordered stretches follow at residues 790-828, 841-860, 991-1132, 1267-1289, and 1355-1379; these read KQEE…EEPQ, KKSE…GEQR, PVAE…SPSD, NERS…TTSN, and DEPT…MEGR. A compositionally biased stretch (basic and acidic residues) spans 800–812; sequence VSDKEKITAKSEG. A compositionally biased stretch (polar residues) spans 1021–1035; that stretch reads KKTVVTSDSNSTGSA. Basic and acidic residues-rich tracts occupy residues 1037 to 1049 and 1080 to 1096; these read SLKD…KDMT and KKEM…KAQE. A necessary for spindle and spindle pole localization region spans residues 1076-1265; the sequence is RNKLKKEMSS…ELLELRENLT (190 aa). A compositionally biased stretch (polar residues) spans 1110–1119; it reads TSVSSENASD. A compositionally biased stretch (basic and acidic residues) spans 1120–1132; it reads STKDDKNSLSPSD. Polar residues predominate over residues 1359-1371; sequence LMNSPTPSPTDNA. Positions 1388-1447 are necessary for nuclear membrane localization; the sequence is GIWIWVALFVVLAVLLALLASLMLQPAVDAAPVGTGDSWMTIQQLLWPYTGLRHNGQPPV. Residues 1389-1409 traverse the membrane as a helical; Anchor for type IV membrane protein segment; that stretch reads IWIWVALFVVLAVLLALLASL. The Lumenal portion of the chain corresponds to 1410–1447; that stretch reads MLQPAVDAAPVGTGDSWMTIQQLLWPYTGLRHNGQPPV.

This sequence belongs to the IRAG2 family.

The protein localises to the endoplasmic reticulum membrane. It is found in the nucleus envelope. It localises to the cytoplasm. The protein resides in the cytoskeleton. Its subcellular location is the microtubule organizing center. The protein localises to the centrosome. It is found in the spindle pole. It localises to the chromosome. Its function is as follows. A maternally expressed membrane and cytoskeletal linker protein, which is essential for attachment of the centrosome to the male pronucleus. Promotes male and female pronucleus congression and subsequent fusion after fertilization. Congression is mediated by the sperm aster microtubules. This Danio rerio (Zebrafish) protein is Inositol 1,4,5-triphosphate receptor associated 2 (irag2).